Consider the following 390-residue polypeptide: Putative methylesterase 11, chloroplastic (390 aa).

The transit peptide at 1-46 directs the protein to the chloroplast; it reads MGNLCSLFTPPKPVKKRKPITKRQSSIGASSSGSGLNSNRWNNRVR. Disordered regions lie at residues 1–52 and 94–119; these read MGNL…SSRR and QGSC…DPLL. Positions 25–48 are enriched in low complexity; sequence SSIGASSSGSGLNSNRWNNRVRSS. The segment covering 94–104 has biased composition (polar residues); it reads QGSCSKKNQLP. Low complexity predominate over residues 105-114; sequence RSSSSRSRSS. In terms of domain architecture, AB hydrolase-1 spans 137–241; sequence NHFVLVHGGS…KAVFLAAAML (105 aa). The Acyl-ester intermediate role is filled by Asp213. Catalysis depends on charge relay system residues Asp339 and His367.

This sequence belongs to the AB hydrolase superfamily. Methylesterase family.

It localises to the plastid. The protein localises to the chloroplast. Its function is as follows. Putative methylesterase. The polypeptide is Putative methylesterase 11, chloroplastic (Arabidopsis thaliana (Mouse-ear cress)).